Here is a 178-residue protein sequence, read N- to C-terminus: Adenine phosphoribosyltransferase (178 aa).

The protein belongs to the purine/pyrimidine phosphoribosyltransferase family. In terms of assembly, homodimer.

It localises to the cytoplasm. The catalysed reaction is AMP + diphosphate = 5-phospho-alpha-D-ribose 1-diphosphate + adenine. It functions in the pathway purine metabolism; AMP biosynthesis via salvage pathway; AMP from adenine: step 1/1. Catalyzes a salvage reaction resulting in the formation of AMP, that is energically less costly than de novo synthesis. This chain is Adenine phosphoribosyltransferase, found in Cereibacter sphaeroides (strain ATCC 17025 / ATH 2.4.3) (Rhodobacter sphaeroides).